We begin with the raw amino-acid sequence, 347 residues long: MRALGAVVTLLLWGQLFAVELGNDAMDFEDDSCPKPPEIANGYVEHLVRYRCRQFYRLRAEGDGVYTLNDEKQWMNTVAGEKLPECEAVCGKPKHPVDQVQRIIGGSMDAKGSFPWQAKMISRHGLTTGATLISDQWLLTTAKNLFLNHSETASGKDIAPTLTLYVGKNQLVEIEKVILHPNHSVVDIGLIKLKQRVLVTERVMPICLPSKDYVAPGRVGYVSGWGRNQDFRFTDRLKYVMLPVADQDKCVVHYEKSTVPEKKNFTSPVGVQPILNEHTFCAGLTKYEEDTCYGDAGSAFAIHDMEEDTWYAAGILSFDKSCAVAEYGVYVRATDLKDWVQETMAKN.

Residues 1–18 form the signal peptide; it reads MRALGAVVTLLLWGQLFA. Residues 31–88 enclose the Sushi domain; sequence DSCPKPPEIANGYVEHLVRYRCRQFYRLRAEGDGVYTLNDEKQWMNTVAGEKLPECEA. 4 disulfide bridges follow: cysteine 52–cysteine 86, cysteine 90–cysteine 207, cysteine 250–cysteine 281, and cysteine 292–cysteine 322. One can recognise a Peptidase S1 domain in the interval 103–345; that stretch reads IIGGSMDAKG…LKDWVQETMA (243 aa). Asparagine 148, asparagine 182, and asparagine 264 each carry an N-linked (GlcNAc...) asparagine glycan. The interval 259–264 is interaction with CD163; sequence VPEKKN.

Belongs to the peptidase S1 family. In terms of assembly, tetramer of two alpha and two beta chains; disulfide-linked. The hemoglobin/haptoglobin complex is composed of a haptoglobin dimer bound to two hemoglobin alpha-beta dimers. Interacts with CD163. Interacts with ERGIC3. As to expression, expressed by the liver and secreted in plasma.

The protein resides in the secreted. Functionally, as a result of hemolysis, hemoglobin is found to accumulate in the kidney and is secreted in the urine. Haptoglobin captures, and combines with free plasma hemoglobin to allow hepatic recycling of heme iron and to prevent kidney damage. Haptoglobin also acts as an antioxidant, has antibacterial activity and plays a role in modulating many aspects of the acute phase response. Hemoglobin/haptoglobin complexes are rapidly cleared by the macrophage CD163 scavenger receptor expressed on the surface of liver Kupfer cells through an endocytic lysosomal degradation pathway. In Mus caroli (Ryukyu mouse), this protein is Haptoglobin (Hp).